The chain runs to 666 residues: tRNA 5-methylaminomethyl-2-thiouridine biosynthesis bifunctional protein MnmC (666 aa).

A tRNA (mnm(5)s(2)U34)-methyltransferase region spans residues 1–245 (MKQYAIQPAT…KREMLCGVME (245 aa)). The FAD-dependent cmnm(5)s(2)U34 oxidoreductase stretch occupies residues 270–666 (IGGGIASALL…RKLLKGKAVK (397 aa)).

This sequence in the N-terminal section; belongs to the methyltransferase superfamily. tRNA (mnm(5)s(2)U34)-methyltransferase family. In the C-terminal section; belongs to the DAO family. Requires FAD as cofactor.

The protein localises to the cytoplasm. It carries out the reaction 5-aminomethyl-2-thiouridine(34) in tRNA + S-adenosyl-L-methionine = 5-methylaminomethyl-2-thiouridine(34) in tRNA + S-adenosyl-L-homocysteine + H(+). Its function is as follows. Catalyzes the last two steps in the biosynthesis of 5-methylaminomethyl-2-thiouridine (mnm(5)s(2)U) at the wobble position (U34) in tRNA. Catalyzes the FAD-dependent demodification of cmnm(5)s(2)U34 to nm(5)s(2)U34, followed by the transfer of a methyl group from S-adenosyl-L-methionine to nm(5)s(2)U34, to form mnm(5)s(2)U34. This chain is tRNA 5-methylaminomethyl-2-thiouridine biosynthesis bifunctional protein MnmC, found in Salmonella arizonae (strain ATCC BAA-731 / CDC346-86 / RSK2980).